The following is a 501-amino-acid chain: Cell division control protein 24 (501 aa).

In terms of assembly, interacts with dna2, pcn1 and rfc1.

The protein localises to the nucleus. Its subcellular location is the cytoplasm. Functionally, has a role in the progression of DNA replication and in the maintenance of genomic integrity. Acts during S phase, after initiation, where it is essential for completion. This Schizosaccharomyces pombe (strain 972 / ATCC 24843) (Fission yeast) protein is Cell division control protein 24 (cdc24).